A 357-amino-acid polypeptide reads, in one-letter code: DNA integrity scanning protein DisA (357 aa).

Residues 3–141 (RPTLRETVAR…GGERHVVADS (139 aa)) enclose the DAC domain. Residues glycine 70, leucine 88, and 101-105 (TRHRS) each bind ATP.

Belongs to the DisA family. Homooctamer. Mg(2+) serves as cofactor.

The catalysed reaction is 2 ATP = 3',3'-c-di-AMP + 2 diphosphate. Participates in a DNA-damage check-point. DisA forms globular foci that rapidly scan along the chromosomes searching for lesions. In terms of biological role, also has diadenylate cyclase activity, catalyzing the condensation of 2 ATP molecules into cyclic di-AMP (c-di-AMP). c-di-AMP likely acts as a signaling molecule that may couple DNA integrity with a cellular process. The polypeptide is DNA integrity scanning protein DisA (Mycolicibacterium paratuberculosis (strain ATCC BAA-968 / K-10) (Mycobacterium paratuberculosis)).